The sequence spans 475 residues: MSPQTETKASVGFKAGVKDYKLTYYTPDYETKDTDILAAFRVTPQPGVPPEEAGAAVAAESSTGTWTTVWTDGLTSLDRYKGRCYHIEPVPGEESQFIAYVAYPLDLFEEGSVTNMFTSIVGNVFGFKALRALRLEDLRIPNAYVKTFQGPPHGIQVERDKLNKYGRPLLGCTIKPKLGLSAKNYGRAVYECLRGGLDFTKDDENVNSQPFMRWRDRFLFCAEALFKAQEETGEIKGHYLNATAGTCEEMMKRAVFARELGVPIVMHDYLTGGFTANTTLAHYCRDNGLLLHIHRAMHAVIDRQKNHGMHFRVLAKALRMSGGDHIHAGTVVGKLEGEREITLGFVDLLRDDFVEKDRSRGIYFTQDWVSLPGVLPVASGGIHVWHMPALTEIFGDDSVLQFGGGTLGHPWGNAPGAVANRVALEACVQARNEGRDLAREGNEIIREASKWSPELAAACEIWKEIKFEFQAMDTL.

Residues 1 to 2 (MS) constitute a propeptide that is removed on maturation. Pro3 carries the post-translational modification N-acetylproline. N6,N6,N6-trimethyllysine is present on Lys14. Positions 123 and 173 each coordinate substrate. Lys175 serves as the catalytic Proton acceptor. Lys177 provides a ligand contact to substrate. Mg(2+)-binding residues include Lys201, Asp203, and Glu204. Lys201 bears the N6-carboxylysine mark. The active-site Proton acceptor is His294. Residues Arg295, His327, and Ser379 each contribute to the substrate site.

Belongs to the RuBisCO large chain family. Type I subfamily. Heterohexadecamer of 8 large chains and 8 small chains; disulfide-linked. The disulfide link is formed within the large subunit homodimers. It depends on Mg(2+) as a cofactor. In terms of processing, the disulfide bond which can form in the large chain dimeric partners within the hexadecamer appears to be associated with oxidative stress and protein turnover.

It localises to the plastid. It is found in the chloroplast. It carries out the reaction 2 (2R)-3-phosphoglycerate + 2 H(+) = D-ribulose 1,5-bisphosphate + CO2 + H2O. It catalyses the reaction D-ribulose 1,5-bisphosphate + O2 = 2-phosphoglycolate + (2R)-3-phosphoglycerate + 2 H(+). In terms of biological role, ruBisCO catalyzes two reactions: the carboxylation of D-ribulose 1,5-bisphosphate, the primary event in carbon dioxide fixation, as well as the oxidative fragmentation of the pentose substrate in the photorespiration process. Both reactions occur simultaneously and in competition at the same active site. The protein is Ribulose bisphosphate carboxylase large chain of Lotus japonicus (Lotus corniculatus var. japonicus).